The following is a 97-amino-acid chain: Putative pterin-4-alpha-carbinolamine dehydratase (97 aa).

It belongs to the pterin-4-alpha-carbinolamine dehydratase family.

The catalysed reaction is (4aS,6R)-4a-hydroxy-L-erythro-5,6,7,8-tetrahydrobiopterin = (6R)-L-erythro-6,7-dihydrobiopterin + H2O. In Cyanothece sp. (strain PCC 7425 / ATCC 29141), this protein is Putative pterin-4-alpha-carbinolamine dehydratase.